A 347-amino-acid polypeptide reads, in one-letter code: MRIEEDLKLGFKDVLIRPKRSTLKSRSDVELERQFTFKHSGQSWSGVPIIAANMDTVGTFSMASALASFDILTAVHKHFSVEEWQAFINNSSADVLKHVMVSTGTSDADFEKTKQILDLNPALNFVCIDVANGYSEHFVQFVAKAREAWPTKTICAGNVVTGEMCEELILSGADIVKVGIGPGSVCTTRVKTGVGYPQLSAVIECADAAHGLGGMIVSDGGCTTPGDVAKAFGGGADFVMLGGMLAGHEESGGRIVEENGEKFMLFYGMSSESAMKRHVGGVAEYRAAEGKTVKLPLRGQVENTARDILGGLRSACTYVGASRLKELTKRTTFIRVLEQENRIFNNL.

108–131 (ADFEKTKQILDLNPALNFVCIDVA) contacts NADP(+). Residues glycine 181 and glycine 183 each contribute to the K(+) site. Cysteine 186 functions as the Thioimidate intermediate in the catalytic mechanism. Residue 216-239 (IVSDGGCTTPGDVAKAFGGGADFV) participates in NADP(+) binding.

Belongs to the IMPDH/GMPR family. GuaC type 1 subfamily. As to quaternary structure, homotetramer.

The enzyme catalyses IMP + NH4(+) + NADP(+) = GMP + NADPH + 2 H(+). Functionally, catalyzes the irreversible NADPH-dependent deamination of GMP to IMP. It functions in the conversion of nucleobase, nucleoside and nucleotide derivatives of G to A nucleotides, and in maintaining the intracellular balance of A and G nucleotides. This Shigella flexneri protein is GMP reductase.